We begin with the raw amino-acid sequence, 433 residues long: Sensor protein RstB (433 aa).

Residues 1–3 (MKK) are Cytoplasmic-facing. A helical membrane pass occupies residues 4 to 24 (LFIQFYLLLFVCFLVMSLLVG). The Periplasmic segment spans residues 25–135 (LVYKFTAERA…PYLYYLHQMR (111 aa)). The helical transmembrane segment at 136 to 156 (LLDIALIAFIAISLAFPVFIW) threads the bilayer. Residues 157–433 (MRPHWQDMLK…WHNIPQFTSA (277 aa)) are Cytoplasmic-facing. The 53-residue stretch at 158–210 (RPHWQDMLKLEAAAQRFGDGHLNERIHFDEGSSFERLGVAFNQMADNINALIA) folds into the HAMP domain. Residues 218-425 (GIAHELRTPL…RFSFSWPLWH (208 aa)) enclose the Histidine kinase domain. A Phosphohistidine; by autocatalysis modification is found at His276.

Post-translationally, autophosphorylated.

The protein resides in the cell inner membrane. The catalysed reaction is ATP + protein L-histidine = ADP + protein N-phospho-L-histidine.. Member of the two-component regulatory system RstB/RstA. RstB functions as a membrane-associated protein kinase that phosphorylates RstA. In Escherichia coli (strain K12), this protein is Sensor protein RstB (rstB).